Here is a 145-residue protein sequence, read N- to C-terminus: Large ribosomal subunit protein uL11m (145 aa).

Belongs to the universal ribosomal protein uL11 family.

It localises to the mitochondrion. The polypeptide is Large ribosomal subunit protein uL11m (RPL11) (Reclinomonas americana).